The primary structure comprises 167 residues: Mitochondrial fission 1 protein B (167 aa).

The stretch at 92–125 (REKLYLLALGYYRSGDFSRSRDCIERCLEVEPES) is one TPR repeat. A helical membrane pass occupies residues 144 to 164 (VIGVGIAVTAVGVVAGIAAAI).

It belongs to the FIS1 family. As to quaternary structure, interacts with PEX11A, PEX11B, PEX11C, PEX11D and PEX11E.

The protein resides in the mitochondrion outer membrane. Its subcellular location is the peroxisome membrane. In terms of biological role, component of the peroxisomal and mitochondrial division machineries. Plays a role in promoting the fission of mitochondria and peroxisomes. In association with PEX11C, PEX11D, PEX11E and DRP3A, is involved in cell cycle-associated constitutive self-replication of preexisting peroxisomes. The protein is Mitochondrial fission 1 protein B (FIS1B) of Arabidopsis thaliana (Mouse-ear cress).